The sequence spans 415 residues: MIDLLWISSDGHPQLFYQFINIPFAFLFHCLSSQGHLSIINRYVYLAMGGFMLAIATMGPYSSLLFLSAIKLLLLIHYIHPMHLHRWILGLQMCWQTCWHLYVQYQIYWLQEAPDSRLLLAISALMLMTQRISSLSLDFQEGTISNQSILIPFLTYSLYFPALLGGPLCSFNAFVQSVERQHTSMTSYLGNLTSKISQVIVLVWIKQLFSELLKSATFNIDSVCLDVLWIWIFSLTLRLNYYAHWKMSECVNNAAGLGVYFHKHSGQTSWDELSDGSVLVTEASSRPSVFARKWNQTTVDWLRKIVFNRTSRSPLFMTFGFSALWHGLHPGQILGFLIWAVTVQADYKLHRFSHPKLNSLWRKRLYVCVNWAFTQLTVACVVVCVELQSLASVKLLWSSCIAVFPLLSALILIIL.

Topologically, residues 1–6 are lumenal; it reads MIDLLW. Residues 7-28 form a helical membrane-spanning segment; the sequence is ISSDGHPQLFYQFINIPFAFLF. At 29-42 the chain is on the cytoplasmic side; sequence HCLSSQGHLSIINR. The helical transmembrane segment at 43–58 threads the bilayer; that stretch reads YVYLAMGGFMLAIATM. Over 59–61 the chain is Lumenal; the sequence is GPY. A helical transmembrane segment spans residues 62-78; the sequence is SSLLFLSAIKLLLLIHY. The Cytoplasmic segment spans residues 79 to 84; that stretch reads IHPMHL. A helical membrane pass occupies residues 85–103; that stretch reads HRWILGLQMCWQTCWHLYV. The Lumenal segment spans residues 104 to 122; that stretch reads QYQIYWLQEAPDSRLLLAI. The helical transmembrane segment at 123 to 138 threads the bilayer; it reads SALMLMTQRISSLSLD. At 139-193 the chain is on the cytoplasmic side; it reads FQEGTISNQSILIPFLTYSLYFPALLGGPLCSFNAFVQSVERQHTSMTSYLGNLT. The chain crosses the membrane as a helical span at residues 194-214; sequence SKISQVIVLVWIKQLFSELLK. At 215 to 227 the chain is on the lumenal side; it reads SATFNIDSVCLDV. The helical transmembrane segment at 228–247 threads the bilayer; it reads LWIWIFSLTLRLNYYAHWKM. Over 248-312 the chain is Cytoplasmic; that stretch reads SECVNNAAGL…RKIVFNRTSR (65 aa). Residues asparagine 295 and histidine 326 contribute to the active site. Residues 313–326 form a helical membrane-spanning segment; sequence SPLFMTFGFSALWH. Topologically, residues 327-328 are lumenal; the sequence is GL. Residues 329 to 345 traverse the membrane as a helical segment; it reads HPGQILGFLIWAVTVQA. Over 346 to 364 the chain is Cytoplasmic; the sequence is DYKLHRFSHPKLNSLWRKR. Residues 365 to 385 form a helical membrane-spanning segment; it reads LYVCVNWAFTQLTVACVVVCV. Over 386 to 394 the chain is Lumenal; sequence ELQSLASVK. The chain crosses the membrane as a helical span at residues 395–415; the sequence is LLWSSCIAVFPLLSALILIIL.

It belongs to the membrane-bound acyltransferase family. As to quaternary structure, monomer. Not glycosylated.

The protein resides in the endoplasmic reticulum membrane. The catalysed reaction is octanoyl-CoA + L-seryl-[protein] = O-octanoyl-L-seryl-[protein] + CoA. It catalyses the reaction decanoyl-CoA + L-seryl-[protein] = O-decanoyl-L-seryl-[protein] + CoA. It carries out the reaction L-seryl-[protein] + acetyl-CoA = O-acetyl-L-seryl-[protein] + CoA. The enzyme catalyses L-seryl-[protein] + butanoyl-CoA = O-butanoyl-L-seryl-[protein] + CoA. The catalysed reaction is pentanoyl-CoA + L-seryl-[protein] = O-pentanoyl-L-seryl-[protein] + CoA. It catalyses the reaction hexanoyl-CoA + L-seryl-[protein] = O-hexanoyl-L-seryl-[protein] + CoA. It carries out the reaction heptanoyl-CoA + L-seryl-[protein] = O-heptanoyl-L-seryl-[protein] + CoA. The enzyme catalyses nonanoyl-CoA + L-seryl-[protein] = O-nonanoyl-L-seryl-[protein] + CoA. The catalysed reaction is L-seryl-[protein] + dodecanoyl-CoA = O-dodecanoyl-L-seryl-[protein] + CoA. It catalyses the reaction L-seryl-[protein] + tetradecanoyl-CoA = O-tetradecanoyl-L-seryl-[protein] + CoA. It carries out the reaction a fatty acyl-CoA + L-seryl-[protein] = O-fatty acyl-L-seryl-[protein] + CoA. Its function is as follows. Catalyzes ghrelin acylation at 'Ser-3' using preferentially octanoyl-CoA, hexanoyl-CoA and decanoyl-CoA as acyl-CoA donors leading to ghrelin activity. In vitro uses also acyl-CoA donors of different lengths from short-chain (C2) to long-chain fatty acids (C16) knowing that acyl-CoA donors from butanoyl-CoA (C4) to dodecanoyl-CoA (C12) are more efficient compared to longer acyl-CoA donors, such as myristoyl-CoA (C14) and palmitoyl-CoA (C16) that are not efficient. In Danio rerio (Zebrafish), this protein is Membrane-bound ghrelin O-acyltransferase mboat4.